A 93-amino-acid polypeptide reads, in one-letter code: Cell division topological specificity factor (93 aa).

Belongs to the MinE family.

Its function is as follows. Prevents the cell division inhibition by proteins MinC and MinD at internal division sites while permitting inhibition at polar sites. This ensures cell division at the proper site by restricting the formation of a division septum at the midpoint of the long axis of the cell. The polypeptide is Cell division topological specificity factor (Synechococcus sp. (strain WH7803)).